Consider the following 213-residue polypeptide: Histone H1.1 (213 aa).

The interval 1–43 is disordered; sequence MSETAPVAQAASTATEKPAAAKKTKKPAKAAAPRKKPAGPSVS. At Ser2 the chain carries N-acetylserine. Residues Ser2 and Ser12 each carry the phosphoserine modification. A compositionally biased stretch (low complexity) spans 8 to 18; the sequence is AQAASTATEKP. Lys17 is subject to N6-acetyllysine. Basic residues predominate over residues 20–37; sequence AAKKTKKPAKAAAPRKKP. Residue Lys36 is modified to N6-(beta-hydroxybutyryl)lysine. One can recognise an H15 domain in the interval 38-111; it reads AGPSVSELIV…GAAGSFKLNK (74 aa). Residue Ser43 is modified to Phosphoserine. Lys54 bears the N6-(beta-hydroxybutyryl)lysine mark. The residue at position 56 (Arg56) is a Citrulline. Lys66 bears the N6-(beta-hydroxybutyryl)lysine mark. At Ser67 the chain carries Phosphoserine. Residue Lys77 is modified to N6-acetyllysine. An N6-(beta-hydroxybutyryl)lysine modification is found at Lys87. Residue Lys92 is modified to N6-(beta-hydroxybutyryl)lysine; alternate. Lys92 carries the post-translational modification N6-acetyllysine; alternate. Ser106 is subject to Phosphoserine. Lys108 carries the N6-(beta-hydroxybutyryl)lysine modification. The tract at residues 112–213 is disordered; it reads KAESKAITTK…KPKKAAPKKK (102 aa). Residues 120 to 144 are compositionally biased toward low complexity; that stretch reads TKVSVKAKASGAAKKPKKTAGAAAK. Lys121 carries the post-translational modification N6-acetyllysine. Composition is skewed to basic residues over residues 145–178 and 185–213; these read KTVK…KKVA and KAVK…PKKK. Thr201 is subject to Phosphothreonine.

This sequence belongs to the histone H1/H5 family. Interacts with DFFB. In terms of processing, H1 histones are progressively phosphorylated during the cell cycle, becoming maximally phosphorylated during late G2 phase and M phase, and being dephosphorylated sharply thereafter. Post-translationally, citrullination at Arg-56 (H1R54ci) by PADI4 takes place within the DNA-binding site of H1 and results in its displacement from chromatin and global chromatin decondensation, thereby promoting pluripotency and stem cell maintenance. Hydroxybutyrylation of histones is induced by starvation. Restricted to thymus, testis and spleen. Present also in lymphocytic and neuronal cells. Increases in testis starting with a low level at day 5 and reaching high concentrations in 20-day old and adult animals.

The protein resides in the nucleus. Its subcellular location is the chromosome. Its function is as follows. Histone H1 protein binds to linker DNA between nucleosomes forming the macromolecular structure known as the chromatin fiber. Histones H1 are necessary for the condensation of nucleosome chains into higher-order structured fibers. Also acts as a regulator of individual gene transcription through chromatin remodeling, nucleosome spacing and DNA methylation. The polypeptide is Histone H1.1 (Mus musculus (Mouse)).